The primary structure comprises 449 residues: UDP-N-acetylmuramate--L-alanine ligase (449 aa).

An ATP-binding site is contributed by 118-124; that stretch reads GTHGKTT.

Belongs to the MurCDEF family.

The protein localises to the cytoplasm. The enzyme catalyses UDP-N-acetyl-alpha-D-muramate + L-alanine + ATP = UDP-N-acetyl-alpha-D-muramoyl-L-alanine + ADP + phosphate + H(+). The protein operates within cell wall biogenesis; peptidoglycan biosynthesis. Cell wall formation. This chain is UDP-N-acetylmuramate--L-alanine ligase, found in Flavobacterium johnsoniae (strain ATCC 17061 / DSM 2064 / JCM 8514 / BCRC 14874 / CCUG 350202 / NBRC 14942 / NCIMB 11054 / UW101) (Cytophaga johnsonae).